The chain runs to 725 residues: MRLNCFRIFVHIQKPTQIFKPFYRSLSSEASDKYHFVNGHKMSKAPTDMAPWPAFIEERIKLWDKLKAEYDAEIAAKESEPIQITLPDGKIHEGKTWRTTPFEIAERISKGLAEAAVIAKVNGAVWDLDRPFEGNAKLELLKFDDDEAKQVFWHSSAHVLGEAMERYCGGHLCYGPPIQEGFYYDMWHENRTICPDDFPKIDQIVKAAVKDKQKFERLEMTKEDLLEMFKYNEFKVRIITEKIHTPKTTVYRCGPLIDLCRGPHVRHTGKVKAMAITKNSSSYWEGKADAESLQRLYGISFPDSKQLKEWQKLQEEAAKRDHRKLGKEHDLFFFHQLSPGSAFWYPKGAHIYNKLVDFIRKQYRRRGFTEVITPNMYNKKLWETSGHWQHYSEDMFKIEVEKEEFGLKPMNCPGHCLMFGHMPHTYNELPFRFADFGVLHRNEMSGALTGLTRVRRFQQDDAHIFCRQDQISEEIKQCLDFLEYAYEKVFGFTFKLNLSTRPEGFLGNIETWDKAEADLTNALNASGRKWVLNPGDGAFYGPKIDITIQDALKRNFQCATIQLDFQLPNQFDLSYFDEKGEKQRPVMIHRAVLGSVERMTAILTESYGGKWPFWLSPRQCKIITVHESVRDYANDVKKQIFEAGFEIEYEENCGDTMNKQVRKAQLAQFNFILVIGAKEKENGTVNVRTRDNAVRGEVALDKLISKFRRFADEYVADTEKSEEWA.

The region spanning 80–142 is the TGS domain; that stretch reads EPIQITLPDG…EGNAKLELLK (63 aa).

The protein belongs to the class-II aminoacyl-tRNA synthetase family.

It localises to the cytoplasm. The catalysed reaction is tRNA(Thr) + L-threonine + ATP = L-threonyl-tRNA(Thr) + AMP + diphosphate + H(+). This is Threonine--tRNA ligase, cytoplasmic from Caenorhabditis elegans.